A 317-amino-acid chain; its full sequence is MRSSDGQEAGRPAAILIAGPTASGKSALGLRIARAFGGTVINTDSMQVYADLRVLSARPTADEEAEAPHRLYGSVDGAVNFSVGHFQRQAAVILSEMAPDQLPVFVGGTGLYFRSLEDGISDLPEVPEPIRQQIRAEAEGRPTEALHATLTLRDPKTAQRLRPSDRMRVMRALEIFAATGRSIGSFQETRLPGPLAGRPLLKVFLSPEREILRRRIDARFVTMMENGALDEVAALRDRRLDPLLPVMRAHGVPGLIAHLDGALSREEAVQRGQGDTRRYAKRQFTWFRHQMGEAWHWTTPEAAWSLAEALLSAPVGQ.

Glycine 19 to serine 26 contributes to the ATP binding site. Residue threonine 21–serine 26 coordinates substrate. The interval aspartate 44–glutamine 47 is interaction with substrate tRNA.

Belongs to the IPP transferase family. As to quaternary structure, monomer. Requires Mg(2+) as cofactor.

The enzyme catalyses adenosine(37) in tRNA + dimethylallyl diphosphate = N(6)-dimethylallyladenosine(37) in tRNA + diphosphate. Catalyzes the transfer of a dimethylallyl group onto the adenine at position 37 in tRNAs that read codons beginning with uridine, leading to the formation of N6-(dimethylallyl)adenosine (i(6)A). This chain is tRNA dimethylallyltransferase, found in Methylorubrum populi (strain ATCC BAA-705 / NCIMB 13946 / BJ001) (Methylobacterium populi).